The sequence spans 463 residues: Glutamate--tRNA ligase (463 aa).

The 'HIGH' region signature appears at 9-19; that stretch reads PSPTGYLHVGG. The segment covering 115–129 has biased composition (basic and acidic residues); that stretch reads AGEKPRYDGTWRPEA. Residues 115-136 are disordered; it reads AGEKPRYDGTWRPEAGKTLPAI. A 'KMSKS' region motif is present at residues 241 to 245; that stretch reads KLSKR. Lys-244 is an ATP binding site.

This sequence belongs to the class-I aminoacyl-tRNA synthetase family. Glutamate--tRNA ligase type 1 subfamily. Monomer.

The protein localises to the cytoplasm. The catalysed reaction is tRNA(Glu) + L-glutamate + ATP = L-glutamyl-tRNA(Glu) + AMP + diphosphate. Its function is as follows. Catalyzes the attachment of glutamate to tRNA(Glu) in a two-step reaction: glutamate is first activated by ATP to form Glu-AMP and then transferred to the acceptor end of tRNA(Glu). This Janthinobacterium sp. (strain Marseille) (Minibacterium massiliensis) protein is Glutamate--tRNA ligase.